Consider the following 770-residue polypeptide: ARF GTPase-activating protein GIT1 (770 aa).

The region spanning 1–124 is the Arf-GAP domain; it reads MSRKGPRAEV…AFVHKLPCRD (124 aa). The segment at 1–124 is interaction with gamma-tubulin and localization to the centrosome; it reads MSRKGPRAEV…AFVHKLPCRD (124 aa). The C4-type zinc-finger motif lies at 11-34; that stretch reads CADCSAPDPGWASISRGVLVCDEC. ANK repeat units follow at residues 132-161, 166-195, and 199-228; these read DLSK…QANF, KGTT…DPGS, and NGRT…ELTD. A Phosphotyrosine modification is found at Tyr-224. The interaction with PCLO stretch occupies residues 245–374; it reads HYIIPQMADR…QGKSLSSPTD (130 aa). The segment at 253–424 is interaction with PTK2/FAK1; sequence DRSRQKCMSQ…NRARSMDSSD (172 aa). Residues 254–376 form an interaction with ARHGEF7 region; sequence RSRQKCMSQS…KSLSSPTDNL (123 aa). Residues 363-425 are disordered; sequence RQQGKSLSSP…RARSMDSSDL (63 aa). A compositionally biased stretch (polar residues) spans 366-383; the sequence is GKSLSSPTDNLELSARSQ. Ser-368 and Ser-371 each carry phosphoserine. A Phosphothreonine modification is found at Thr-373. The interval 375–596 is interaction with NCK2 and GRIN3A; the sequence is NLELSARSQS…QEGSRHASKL (222 aa). A required for localization at synapses region spans residues 375 to 596; sequence NLELSARSQS…QEGSRHASKL (222 aa). Phosphoserine occurs at positions 379 and 384. Tyr-392 is modified (phosphotyrosine). A phosphoserine mark is found at Ser-394 and Ser-397. Residues 394–403 show a composition bias toward acidic residues; that stretch reads SVASDEDTDQ. The residue at position 401 (Thr-401) is a Phosphothreonine. A phosphoserine mark is found at Ser-419, Ser-422, and Ser-426. The interaction with MAPK1 stretch occupies residues 420-475; that stretch reads MDSSDLSDGAVTLQEYLELKKALATSEAKVQQLMKVNSSLSDELRRLQREIHKLQA. The segment at 429–629 is interaction with IKBKG; sequence AVTLQEYLEL…EGKRFLELSK (201 aa). Residues 449–483 are a coiled coil; sequence VQQLMKVNSSLSDELRRLQREIHKLQAENLQLRQP. Phosphoserine is present on residues Ser-507 and Ser-545. Position 546 is a phosphothreonine (Thr-546). Residues Tyr-554 and Tyr-563 each carry the phosphotyrosine modification. Ser-570, Ser-580, Ser-601, and Ser-605 each carry phosphoserine. A compositionally biased stretch (polar residues) spans 578-588; it reads PSSPLLSCSQE. Residues 578-615 are disordered; it reads PSSPLLSCSQEGSRHASKLSRHGSGADSDYENTQSGDP. Thr-610 is modified (phosphothreonine). Ser-639 is subject to Phosphoserine. The segment at 646–770 is interaction with PXN and TGFB1I1; it reads PGLPSTEDVI…VTITTREKKQ (125 aa).

Forms homodimers and possibly oligomers. May forms heterooligomers with GIT2. Interacts with G protein-coupled receptor kinases, including GRK2, GRK3, GRK5 and GRK6. Interacts with PPFIA1, PPFIA2 and PPFIA4. Interacts with GRIP1 and forms a ternary complex with PPFIA1 and GRIP1. Directly interacts with ARHGEF7/beta-PIX, forming in vitro a heptameric complex made of a GIT1 dimer and an ARHGEF7 trimer. Directly interacts with PXN/paxillin; this interaction is enhanced in the presence of ARHGEF7. Directly interacts (via C-terminus) with TGFB1I1/Hic-5 (via LD motif 3). Directly interacts with PTK2/FAK1. May interact with PTK2B/PYK2; this interaction may be indirect. Interacts with AMPA receptors GRIA2/3. Directly interacts with protein Piccolo/PCLO. Forms a complex with Ephrin-B1/EFNB1 and NCK2/GRB4 (via SH2); this interaction is important for spine morphogenesis and synapse formation. Interaction with NCK2 is transient and depends upon GIT1 phosphorylation at Tyr-392. Interacts with GRIN3A/GluN3A (via C-terminus); this interaction competes with GIT1 interaction with ARHGEF7 and limits synaptic localization of GIT1. Interacts with IKBKG/NEMO in resting bone mesenchymal stem cells, as well as in TNF-stimulated cells; this interaction may increase IKBKG affinity for 'Lys-63'-linked polyubiquitin chains. Interacts with GABA(A) receptors, including GABRB3 and GABRG2. Interacts with SCRIB. Interacts (via N- and C-terminus) with ENTR1/SDCCAG3 (via N-terminus); this interaction is direct. May form a tripartite complex with ENTR1 and PTPN13. Interacts with YWHAZ. Interacts with PAK1. Interacts with PAK3. Directly interacts (via N-terminus) with gamma-tubulin. Interacts with MAPK1 and MAPK3; this interaction is required for MAPK1/3 recruitment to focal adhesions. In terms of processing, phosphorylated on tyrosine residues by PTK2/FAK1 and SRC in growing fibroblasts. Phosphorylation at Tyr-392 is induced by activation of Ephrin-B1/EFNB1 and catalyzed by SRC family kinases. It is required for the interaction with NCK2 and for GIT1 recruitment to synapses in hippocampal neurons. Expressed in the brain (at protein level). Also expressed at high levels in lung and heart. In lung, expressed in endothelial cells, especially in capillaries; also expressed in smooth muscle and epithelial cells of bronchi (at protein level). Expressed in bone marrow mesenchymal stem cells, as well as in osteoclasts and bone marrow-derived macrophages (at protein level).

Its subcellular location is the cytoplasm. It localises to the presynapse. The protein resides in the postsynapse. The protein localises to the postsynaptic density. It is found in the cell junction. Its subcellular location is the focal adhesion. It localises to the cell projection. The protein resides in the lamellipodium. The protein localises to the cytoskeleton. It is found in the microtubule organizing center. Its subcellular location is the centrosome. It localises to the spindle pole. Its function is as follows. GTPase-activating protein for ADP ribosylation factor family members, including ARF1. Multidomain scaffold protein that interacts with numerous proteins and therefore participates in many cellular functions, including receptor internalization, focal adhesion remodeling, and signaling by both G protein-coupled receptors and tyrosine kinase receptors. Through PAK1 activation, positively regulates microtubule nucleation during interphase. Plays a role in the regulation of cytokinesis; for this function, may act in a pathway also involving ENTR1 and PTPN13. May promote cell motility both by regulating focal complex dynamics and by the activation of RAC1. May act as scaffold for MAPK1/3 signal transduction, recruiting MAPK1/3 to focal adhesions after EGF stimulation via a Src-dependent pathway, hence stimulating cell migration. Plays a role in brain development and function. Involved in the regulation of spine density and synaptic plasticity that is required for processes involved in learning. Plays an important role in dendritic spine morphogenesis and synapse formation. In hippocampal neurons, recruits guanine nucleotide exchange factors (GEFs), such as ARHGEF7/beta-PIX, to the synaptic membrane. These in turn locally activate RAC1, which is an essential step for spine morphogenesis and synapse formation. May contribute to the organization of presynaptic active zones through oligomerization and formation of a Piccolo/PCLO-based protein network, which includes ARHGEF7/beta-PIX and FAK1. In neurons, through its interaction with liprin-alpha family members, may be required for AMPA receptor (GRIA2/3) proper targeting to the cell membrane. In complex with GABA(A) receptors and ARHGEF7, plays a crucial role in regulating GABA(A) receptor synaptic stability, maintaining GPHN/gephyrin scaffolds and hence GABAergic inhibitory synaptic transmission, by locally coordinating RAC1 and PAK1 downstream effector activity, leading to F-actin stabilization. May also be important for RAC1 downstream signaling pathway through PAK3 and regulation of neuronal inhibitory transmission at presynaptic input. Required for successful bone regeneration during fracture healing. The function in intramembranous ossification may, at least partly, exerted by macrophages in which GIT1 is a key negative regulator of redox homeostasis, IL1B production, and glycolysis, acting through the ERK1/2/NRF2/NFE2L2 axis. May play a role in angiogenesis during fracture healing. In this process, may regulate activation of the canonical NF-kappa-B signal in bone mesenchymal stem cells by enhancing the interaction between NEMO and 'Lys-63'-ubiquitinated RIPK1/RIP1, eventually leading to enhanced production of VEGFA and others angiogenic factors. Essential for VEGF signaling through the activation of phospholipase C-gamma and ERK1/2, hence may control endothelial cell proliferation and angiogenesis. This Mus musculus (Mouse) protein is ARF GTPase-activating protein GIT1 (Git1).